Here is a 622-residue protein sequence, read N- to C-terminus: 1-deoxy-D-xylulose-5-phosphate synthase (622 aa).

Residues His-80 and 121–123 (GHS) each bind thiamine diphosphate. Asp-152 lines the Mg(2+) pocket. Thiamine diphosphate contacts are provided by residues 153-154 (GA), Asn-181, Tyr-288, and Glu-370. Asn-181 provides a ligand contact to Mg(2+).

The protein belongs to the transketolase family. DXPS subfamily. In terms of assembly, homodimer. Mg(2+) is required as a cofactor. Thiamine diphosphate serves as cofactor.

The catalysed reaction is D-glyceraldehyde 3-phosphate + pyruvate + H(+) = 1-deoxy-D-xylulose 5-phosphate + CO2. It participates in metabolic intermediate biosynthesis; 1-deoxy-D-xylulose 5-phosphate biosynthesis; 1-deoxy-D-xylulose 5-phosphate from D-glyceraldehyde 3-phosphate and pyruvate: step 1/1. Functionally, catalyzes the acyloin condensation reaction between C atoms 2 and 3 of pyruvate and glyceraldehyde 3-phosphate to yield 1-deoxy-D-xylulose-5-phosphate (DXP). This Shewanella baltica (strain OS185) protein is 1-deoxy-D-xylulose-5-phosphate synthase.